The primary structure comprises 379 residues: Glucose-1-phosphate adenylyltransferase (379 aa).

Alpha-D-glucose 1-phosphate contacts are provided by residues Gly164, 179–180 (EK), and Ser190.

The protein belongs to the bacterial/plant glucose-1-phosphate adenylyltransferase family. In terms of assembly, homotetramer.

It catalyses the reaction alpha-D-glucose 1-phosphate + ATP + H(+) = ADP-alpha-D-glucose + diphosphate. The protein operates within glycan biosynthesis; glycogen biosynthesis. Involved in the biosynthesis of ADP-glucose, a building block required for the elongation reactions to produce glycogen. Catalyzes the reaction between ATP and alpha-D-glucose 1-phosphate (G1P) to produce pyrophosphate and ADP-Glc. This Streptococcus uberis (strain ATCC BAA-854 / 0140J) protein is Glucose-1-phosphate adenylyltransferase.